A 363-amino-acid polypeptide reads, in one-letter code: SWIRM domain-containing protein YOR338W (363 aa).

Disordered regions lie at residues 1-22 (MLDN…GGIN) and 186-208 (LYED…VPVR). The span at 186–196 (LYEDDGNRSEN) shows a compositional bias: basic and acidic residues. The SWIRM domain occupies 266-363 (LKVEWKGSPM…LQDKHFEKYL (98 aa)).

This is SWIRM domain-containing protein YOR338W from Saccharomyces cerevisiae (strain ATCC 204508 / S288c) (Baker's yeast).